Here is a 404-residue protein sequence, read N- to C-terminus: Multidrug resistance protein MdtG (404 aa).

The next 11 membrane-spanning stretches (helical) occupy residues 19–39 (LGCF…PLYV), 56–76 (LVFS…GGLA), 90–110 (LGMA…QFLI), 113–133 (ALLG…ATQV), 144–164 (TLST…GLLA), 171–191 (PVFF…FFFI), 222–242 (LFVT…ILTL), 254–274 (IAFI…LSAP), 288–308 (ILIV…FVQT), 317–337 (FLLG…LVYN), and 376–396 (AVFC…WNSL).

It belongs to the major facilitator superfamily. DHA1 family. MdtG (TC 2.A.1.2.20) subfamily.

It localises to the cell inner membrane. The protein is Multidrug resistance protein MdtG of Salmonella dublin (strain CT_02021853).